The following is a 159-amino-acid chain: Urease accessory protein UreE (159 aa).

The protein belongs to the UreE family.

The protein localises to the cytoplasm. Involved in urease metallocenter assembly. Binds nickel. Probably functions as a nickel donor during metallocenter assembly. This is Urease accessory protein UreE from Acinetobacter baylyi (strain ATCC 33305 / BD413 / ADP1).